The following is a 341-amino-acid chain: uncharacterized protein (341 aa).

Residues 153-179 (AYTLSEKVMNAEREAEETRETIIREAH) are a coiled coil. The span at 319–335 (EQLQNPAPESAPSTSKT) shows a compositional bias: polar residues. Positions 319-341 (EQLQNPAPESAPSTSKTLRSKNP) are disordered.

This is an uncharacterized protein from Coxiella burnetii (strain RSA 493 / Nine Mile phase I).